The primary structure comprises 345 residues: UPF0324 membrane protein Cgl0015/cg0018 (345 aa).

10 helical membrane-spanning segments follow: residues 15-37 (LRTG…VLIA), 44-66 (FSGV…LIQL), 81-103 (LLRL…SLGF), 105-124 (MLAV…ILMG), 134-156 (VLLI…EGVT), 163-185 (VVTA…PFAT), 205-227 (EIAQ…AVVV), 261-280 (VVPL…STVA), 285-307 (VIAA…LGCG), and 320-342 (PFIL…TLLT).

The protein belongs to the UPF0324 family.

Its subcellular location is the cell membrane. In Corynebacterium glutamicum (strain ATCC 13032 / DSM 20300 / JCM 1318 / BCRC 11384 / CCUG 27702 / LMG 3730 / NBRC 12168 / NCIMB 10025 / NRRL B-2784 / 534), this protein is UPF0324 membrane protein Cgl0015/cg0018.